Here is a 124-residue protein sequence, read N- to C-terminus: Ribonuclease pancreatic (124 aa).

The tract at residues 1-21 (AESSAMKFQRQHMDSDGHPDT) is disordered. The substrate site is built by K7 and R10. The Proton acceptor role is filled by H12. Disulfide bonds link C26-C84, C40-C95, C58-C110, and C65-C72. Residues 41–45 (KPVNT), K66, and R85 contribute to the substrate site. Catalysis depends on H119, which acts as the Proton donor.

This sequence belongs to the pancreatic ribonuclease family. Monomer. Interacts with and forms tight 1:1 complexes with RNH1. Dimerization of two such complexes may occur. Interaction with RNH1 inhibits this protein. Pancreas.

It localises to the secreted. It catalyses the reaction an [RNA] containing cytidine + H2O = an [RNA]-3'-cytidine-3'-phosphate + a 5'-hydroxy-ribonucleotide-3'-[RNA].. The catalysed reaction is an [RNA] containing uridine + H2O = an [RNA]-3'-uridine-3'-phosphate + a 5'-hydroxy-ribonucleotide-3'-[RNA].. Its function is as follows. Endonuclease that catalyzes the cleavage of RNA on the 3' side of pyrimidine nucleotides. Acts on single-stranded and double-stranded RNA. The chain is Ribonuclease pancreatic (RNASE1) from Galea musteloides (Common yellow-toothed cavy).